The following is an 89-amino-acid chain: Elongation factor 1-beta (89 aa).

Belongs to the EF-1-beta/EF-1-delta family.

Its function is as follows. Promotes the exchange of GDP for GTP in EF-1-alpha/GDP, thus allowing the regeneration of EF-1-alpha/GTP that could then be used to form the ternary complex EF-1-alpha/GTP/AAtRNA. This Methanosarcina barkeri (strain Fusaro / DSM 804) protein is Elongation factor 1-beta.